Here is a 498-residue protein sequence, read N- to C-terminus: Lysine--tRNA ligase (498 aa).

2 residues coordinate Mg(2+): Glu-408 and Glu-415.

The protein belongs to the class-II aminoacyl-tRNA synthetase family. In terms of assembly, homodimer. Mg(2+) serves as cofactor.

It is found in the cytoplasm. It catalyses the reaction tRNA(Lys) + L-lysine + ATP = L-lysyl-tRNA(Lys) + AMP + diphosphate. The chain is Lysine--tRNA ligase from Listeria welshimeri serovar 6b (strain ATCC 35897 / DSM 20650 / CCUG 15529 / CIP 8149 / NCTC 11857 / SLCC 5334 / V8).